Here is a 240-residue protein sequence, read N- to C-terminus: Uridylate kinase (240 aa).

14-17 contacts ATP; that stretch reads KLSG. G56 is a UMP binding site. Residues G57 and R61 each coordinate ATP. Residues D76 and 137-144 each bind UMP; that span reads TGNPFFTT. Positions 164, 170, and 173 each coordinate ATP.

It belongs to the UMP kinase family. As to quaternary structure, homohexamer.

It is found in the cytoplasm. The enzyme catalyses UMP + ATP = UDP + ADP. The protein operates within pyrimidine metabolism; CTP biosynthesis via de novo pathway; UDP from UMP (UMPK route): step 1/1. Inhibited by UTP. Its function is as follows. Catalyzes the reversible phosphorylation of UMP to UDP. In Albidiferax ferrireducens (strain ATCC BAA-621 / DSM 15236 / T118) (Rhodoferax ferrireducens), this protein is Uridylate kinase.